We begin with the raw amino-acid sequence, 375 residues long: Membrane progesterone receptor epsilon (375 aa).

The interval 1–39 (MPRRLQQRGAGVKGPPASTSRRSHPASASAPRSPPAATT) is disordered. Residues 1-84 (MPRRLQQRGA…VLKPTNETLN (84 aa)) lie on the Cytoplasmic side of the membrane. Residues 15–39 (PPASTSRRSHPASASAPRSPPAATT) are compositionally biased toward low complexity. A helical transmembrane segment spans residues 85–105 (FWTHFIPLLLFLSKFCRLFFL). At 106-114 (GGSDVPFHH) the chain is on the extracellular side. A helical transmembrane segment spans residues 115-135 (PWLLPLWCYASGVLLTFAMSC). Topologically, residues 136–160 (TAHVFSCLSLRLRAAFFYLDYASIS) are cytoplasmic. The helical transmembrane segment at 161 to 181 (YYGFGSTVAYYYYLLPSLSLL) threads the bilayer. The Extracellular segment spans residues 182 to 203 (DARVMTPYVQQRLGWHVDCTRL). Residues 204–224 (IAVYRALVLPVAFVLAVACTV) form a helical membrane-spanning segment. At 225-241 (ACCKSRTDWCSYPFALR) the chain is on the cytoplasmic side. The helical transmembrane segment at 242 to 262 (TFVFVMPLSMACPIMLESWLF) threads the bilayer. Residues 263-299 (DLRGENPTLFVHFYRRYFWLVVAAFFNVSKIPERIQP) lie on the Extracellular side of the membrane. A helical membrane pass occupies residues 300 to 320 (GLFDIIGHSHQLFHIFTFLSI). At 321 to 341 (YDQVYYVEEGLRQFLQAPPAA) the chain is on the cytoplasmic side. A helical membrane pass occupies residues 342–362 (PTFSGTVGYMLLLVVCLGLVI). At 363-375 (RKFLNSTEFCSKK) the chain is on the extracellular side.

Belongs to the ADIPOR family. In terms of assembly, homodimer.

Its subcellular location is the cell membrane. Its function is as follows. Plasma membrane progesterone (P4) receptor coupled to G proteins. Seems to act through a G(s) mediated pathway. May be involved in regulating rapid P4 signaling in the nervous system. Also binds dehydroepiandrosterone (DHEA), pregnanolone, pregnenolone and allopregnanolone. This is Membrane progesterone receptor epsilon from Mus musculus (Mouse).